The sequence spans 595 residues: Aspartate--tRNA ligase (595 aa).

Glu-176 serves as a coordination point for L-aspartate. Positions 200–203 (QIFK) are aspartate. Arg-222 serves as a coordination point for L-aspartate. Residues 222 to 224 (RDE) and Gln-231 each bind ATP. His-450 contributes to the L-aspartate binding site. Glu-484 serves as a coordination point for ATP. Arg-491 lines the L-aspartate pocket. 536 to 539 (GLDR) is a binding site for ATP.

The protein belongs to the class-II aminoacyl-tRNA synthetase family. Type 1 subfamily. Homodimer.

The protein resides in the cytoplasm. The catalysed reaction is tRNA(Asp) + L-aspartate + ATP = L-aspartyl-tRNA(Asp) + AMP + diphosphate. Catalyzes the attachment of L-aspartate to tRNA(Asp) in a two-step reaction: L-aspartate is first activated by ATP to form Asp-AMP and then transferred to the acceptor end of tRNA(Asp). This is Aspartate--tRNA ligase from Halalkalibacterium halodurans (strain ATCC BAA-125 / DSM 18197 / FERM 7344 / JCM 9153 / C-125) (Bacillus halodurans).